Reading from the N-terminus, the 739-residue chain is Phosphoribosylformylglycinamidine synthase subunit PurL (739 aa).

Residue histidine 53 is part of the active site. The ATP site is built by tyrosine 56 and lysine 95. Glutamate 97 is a Mg(2+) binding site. Substrate-binding positions include 98–101 and arginine 120; that span reads SHNH. Histidine 99 functions as the Proton acceptor in the catalytic mechanism. Residue aspartate 121 participates in Mg(2+) binding. Position 244 (glutamine 244) interacts with substrate. Aspartate 274 contacts Mg(2+). Residue 318 to 320 participates in substrate binding; that stretch reads ESQ. Positions 501 and 538 each coordinate ATP. Asparagine 539 is a Mg(2+) binding site. Serine 541 provides a ligand contact to substrate.

Belongs to the FGAMS family. As to quaternary structure, monomer. Part of the FGAM synthase complex composed of 1 PurL, 1 PurQ and 2 PurS subunits.

The protein resides in the cytoplasm. It carries out the reaction N(2)-formyl-N(1)-(5-phospho-beta-D-ribosyl)glycinamide + L-glutamine + ATP + H2O = 2-formamido-N(1)-(5-O-phospho-beta-D-ribosyl)acetamidine + L-glutamate + ADP + phosphate + H(+). It functions in the pathway purine metabolism; IMP biosynthesis via de novo pathway; 5-amino-1-(5-phospho-D-ribosyl)imidazole from N(2)-formyl-N(1)-(5-phospho-D-ribosyl)glycinamide: step 1/2. Part of the phosphoribosylformylglycinamidine synthase complex involved in the purines biosynthetic pathway. Catalyzes the ATP-dependent conversion of formylglycinamide ribonucleotide (FGAR) and glutamine to yield formylglycinamidine ribonucleotide (FGAM) and glutamate. The FGAM synthase complex is composed of three subunits. PurQ produces an ammonia molecule by converting glutamine to glutamate. PurL transfers the ammonia molecule to FGAR to form FGAM in an ATP-dependent manner. PurS interacts with PurQ and PurL and is thought to assist in the transfer of the ammonia molecule from PurQ to PurL. The protein is Phosphoribosylformylglycinamidine synthase subunit PurL of Listeria innocua serovar 6a (strain ATCC BAA-680 / CLIP 11262).